The primary structure comprises 589 residues: Transmembrane 9 superfamily member 3 (589 aa).

A signal peptide spans 1 to 28 (MRPLPGALGVAAAAALWLLLLLLPRTRA). Asparagine 174 is a glycosylation site (N-linked (GlcNAc...) asparagine). The next 5 membrane-spanning stretches (helical) occupy residues 224 to 244 (FSIF…SMIL), 294 to 314 (LIGS…VAMI), 328 to 348 (AIFV…SLYA), 360 to 380 (FIGA…INFI), and 389 to 409 (AIPF…ILPL). The N-linked (GlcNAc...) asparagine glycan is linked to asparagine 419. The next 4 helical transmembrane spans lie at 449–469 (IVCL…YFIF), 482–502 (GFMM…TIVC), 519–539 (FLSA…YYFF), and 551–571 (FYFG…GAIG).

Belongs to the nonaspanin (TM9SF) (TC 9.A.2) family.

The protein resides in the membrane. The chain is Transmembrane 9 superfamily member 3 (TM9SF3) from Homo sapiens (Human).